The chain runs to 132 residues: Small ribosomal subunit protein uS8 (132 aa).

The protein belongs to the universal ribosomal protein uS8 family. Part of the 30S ribosomal subunit. Contacts proteins S5 and S12.

In terms of biological role, one of the primary rRNA binding proteins, it binds directly to 16S rRNA central domain where it helps coordinate assembly of the platform of the 30S subunit. The sequence is that of Small ribosomal subunit protein uS8 from Psychrobacter cryohalolentis (strain ATCC BAA-1226 / DSM 17306 / VKM B-2378 / K5).